The chain runs to 301 residues: Cuticle collagen 2 (301 aa).

The first 37 residues, 1-37 (MDIDARIKAYKFVAYSAVTFSVVAVVSVFITLPMVYN), serve as a signal peptide directing secretion. Triple-helical region stretches follow at residues 105 to 134 (GPPGPGGSPGKPGKPGKPGAPGAPGNPGKG), 153 to 176 (GPPGPAGPAGPPGPPGPDGNPGSP), 183 to 212 (GPAGPPGPAGPAGNDGAPGAPGGPGEPGAS), and 215 to 282 (GGPG…KGIC). The interval 109–284 (PGGSPGKPGK…GEGEKGICPK (176 aa)) is disordered. Pro residues-rich tracts occupy residues 143-170 (TQPPCQPCPGGPPGPAGPAGPPGPPGPD) and 179-191 (PSGPGPAGPPGPA). Over residues 201–218 (GAPGGPGEPGASEQGGPG) the composition is skewed to gly residues. A compositionally biased stretch (pro residues) spans 219 to 229 (EPGPAGPPGPA). Residues 252-261 (PGAAGAPGAD) are compositionally biased toward low complexity. Residues 262–274 (GNPGGPGTAGKPG) show a composition bias toward gly residues.

This sequence belongs to the cuticular collagen family. In terms of assembly, collagen polypeptide chains are complexed within the cuticle by disulfide bonds and other types of covalent cross-links. As to expression, syncytial dorsal and ventral epidermis.

Its function is as follows. Nematode cuticles are composed largely of collagen-like proteins. The cuticle functions both as an exoskeleton and as a barrier to protect the worm from its environment. In Caenorhabditis elegans, this protein is Cuticle collagen 2 (col-2).